Reading from the N-terminus, the 161-residue chain is MSQLTHINAAGEAHMVDVSAKAETVREARAEAFVTMLPETLAMIIDGSHHKGDVFATARIAGIQAAKRTWDLIPLCHPLMLSKVEVNLLADPEHSRVRIESLCRLTGKTGVEMEALTAASVAALTIYDMCKAVQKDMVIGPVRLLTKSGGKSGDFKADSHD.

Residues 75–77 (LCH) and 113–114 (ME) each bind substrate. Asp128 is an active-site residue.

Belongs to the MoaC family. As to quaternary structure, homohexamer; trimer of dimers.

The enzyme catalyses (8S)-3',8-cyclo-7,8-dihydroguanosine 5'-triphosphate = cyclic pyranopterin phosphate + diphosphate. It functions in the pathway cofactor biosynthesis; molybdopterin biosynthesis. Its function is as follows. Catalyzes the conversion of (8S)-3',8-cyclo-7,8-dihydroguanosine 5'-triphosphate to cyclic pyranopterin monophosphate (cPMP). This is Cyclic pyranopterin monophosphate synthase from Enterobacter sp. (strain 638).